A 138-amino-acid chain; its full sequence is Large ribosomal subunit protein uL16 (138 aa).

The protein belongs to the universal ribosomal protein uL16 family. Part of the 50S ribosomal subunit.

Binds 23S rRNA and is also seen to make contacts with the A and possibly P site tRNAs. This chain is Large ribosomal subunit protein uL16, found in Chlamydia pneumoniae (Chlamydophila pneumoniae).